A 361-amino-acid chain; its full sequence is tRNA/tmRNA (uracil-C(5))-methyltransferase (361 aa).

S-adenosyl-L-methionine-binding residues include Gln183, Tyr211, Asn216, Glu232, and Asp294. Residue Cys319 is the Nucleophile of the active site. Glu353 (proton acceptor) is an active-site residue.

The protein belongs to the class I-like SAM-binding methyltransferase superfamily. RNA M5U methyltransferase family. TrmA subfamily.

The catalysed reaction is uridine(54) in tRNA + S-adenosyl-L-methionine = 5-methyluridine(54) in tRNA + S-adenosyl-L-homocysteine + H(+). The enzyme catalyses uridine(341) in tmRNA + S-adenosyl-L-methionine = 5-methyluridine(341) in tmRNA + S-adenosyl-L-homocysteine + H(+). Functionally, dual-specificity methyltransferase that catalyzes the formation of 5-methyluridine at position 54 (m5U54) in all tRNAs, and that of position 341 (m5U341) in tmRNA (transfer-mRNA). The protein is tRNA/tmRNA (uracil-C(5))-methyltransferase of Acinetobacter baumannii (strain AYE).